The sequence spans 380 residues: Cytochrome b (380 aa).

A run of 4 helical transmembrane segments spans residues 34–54 (FGSL…LLAM), 78–99 (WLIR…YLHI), 114–134 (WNTG…GYVL), and 179–199 (FFAL…IHLT). The heme b site is built by histidine 84 and histidine 98. Heme b is bound by residues histidine 183 and histidine 197. Histidine 202 contacts a ubiquinone. A run of 4 helical transmembrane segments spans residues 227–247 (LKDI…ALFS), 289–309 (LGGV…PFLH), 321–341 (LSQL…WVGS), and 348–368 (FIII…ILFP).

It belongs to the cytochrome b family. In terms of assembly, the cytochrome bc1 complex contains 11 subunits: 3 respiratory subunits (MT-CYB, CYC1 and UQCRFS1), 2 core proteins (UQCRC1 and UQCRC2) and 6 low-molecular weight proteins (UQCRH/QCR6, UQCRB/QCR7, UQCRQ/QCR8, UQCR10/QCR9, UQCR11/QCR10 and a cleavage product of UQCRFS1). This cytochrome bc1 complex then forms a dimer. It depends on heme b as a cofactor.

It is found in the mitochondrion inner membrane. Its function is as follows. Component of the ubiquinol-cytochrome c reductase complex (complex III or cytochrome b-c1 complex) that is part of the mitochondrial respiratory chain. The b-c1 complex mediates electron transfer from ubiquinol to cytochrome c. Contributes to the generation of a proton gradient across the mitochondrial membrane that is then used for ATP synthesis. This Ardenna tenuirostris (Short-tailed shearwater) protein is Cytochrome b (MT-CYB).